The following is a 256-amino-acid chain: Imidazole glycerol phosphate synthase subunit HisF (256 aa).

Catalysis depends on residues aspartate 11 and aspartate 130.

It belongs to the HisA/HisF family. As to quaternary structure, heterodimer of HisH and HisF.

Its subcellular location is the cytoplasm. The enzyme catalyses 5-[(5-phospho-1-deoxy-D-ribulos-1-ylimino)methylamino]-1-(5-phospho-beta-D-ribosyl)imidazole-4-carboxamide + L-glutamine = D-erythro-1-(imidazol-4-yl)glycerol 3-phosphate + 5-amino-1-(5-phospho-beta-D-ribosyl)imidazole-4-carboxamide + L-glutamate + H(+). It participates in amino-acid biosynthesis; L-histidine biosynthesis; L-histidine from 5-phospho-alpha-D-ribose 1-diphosphate: step 5/9. In terms of biological role, IGPS catalyzes the conversion of PRFAR and glutamine to IGP, AICAR and glutamate. The HisF subunit catalyzes the cyclization activity that produces IGP and AICAR from PRFAR using the ammonia provided by the HisH subunit. This chain is Imidazole glycerol phosphate synthase subunit HisF, found in Cupriavidus metallidurans (strain ATCC 43123 / DSM 2839 / NBRC 102507 / CH34) (Ralstonia metallidurans).